An 870-amino-acid chain; its full sequence is DNA mismatch repair protein MutS (870 aa).

617–624 (GPNMAGKS) is an ATP binding site.

Belongs to the DNA mismatch repair MutS family.

This protein is involved in the repair of mismatches in DNA. It is possible that it carries out the mismatch recognition step. This protein has a weak ATPase activity. In Phocaeicola vulgatus (strain ATCC 8482 / DSM 1447 / JCM 5826 / CCUG 4940 / NBRC 14291 / NCTC 11154) (Bacteroides vulgatus), this protein is DNA mismatch repair protein MutS.